A 161-amino-acid polypeptide reads, in one-letter code: Urease accessory protein UreE (161 aa).

It belongs to the UreE family.

The protein localises to the cytoplasm. Functionally, involved in urease metallocenter assembly. Binds nickel. Probably functions as a nickel donor during metallocenter assembly. This is Urease accessory protein UreE from Arthrobacter sp. (strain FB24).